The primary structure comprises 439 residues: uncharacterized protein (439 aa).

2 consecutive CBS domains span residues 195 to 254 and 256 to 314; these read LTPA…SIEK and MTKN…KQPQ.

This is an uncharacterized protein from Bacillus subtilis (strain 168).